The following is a 422-amino-acid chain: Ferrochelatase, mitochondrial (422 aa).

The transit peptide at 1-53 (MLSASANMAAALRAAGALLREPLVHGSSRACQPWRCQSGAAVAATTEKVHHAK) directs the protein to the mitochondrion. Residue K56 is modified to N6-acetyllysine. Protoporphyrin IX-binding residues include R114, Y122, and S129. K137 carries the post-translational modification N6-succinyllysine. [2Fe-2S] cluster is bound at residue C195. H229 is an active-site residue. K289 is modified (N6-acetyllysine; alternate). K289 bears the N6-succinyllysine; alternate mark. The active site involves D382. The [2Fe-2S] cluster site is built by C402, C405, and C410. At K414 the chain carries N6-acetyllysine; alternate. Residue K414 is modified to N6-succinyllysine; alternate.

It belongs to the ferrochelatase family. In terms of assembly, homodimer. Homotetramer. Interaction with PGRMC1; the interaction results in decreased FECH activity. Interacts with ABCB10 and SLC25A37; this interaction forms an oligomeric complex. Forms a complex with ABCB7 and ABCB10, where a dimeric FECH bridges ABCB7 and ABCB10 homodimers; this complex may be required for cellular iron homeostasis, mitochondrial function and heme biosynthesis. Interacts with ABCB7 and ABCB10. It depends on [2Fe-2S] cluster as a cofactor. Erythroid and hepatic cells.

It localises to the mitochondrion inner membrane. It carries out the reaction heme b + 2 H(+) = protoporphyrin IX + Fe(2+). It participates in porphyrin-containing compound metabolism; protoheme biosynthesis; protoheme from protoporphyrin-IX: step 1/1. Its function is as follows. Catalyzes the ferrous insertion into protoporphyrin IX. In Mus musculus (Mouse), this protein is Ferrochelatase, mitochondrial.